The sequence spans 79 residues: Transcriptional regulator SplA (79 aa).

Its function is as follows. Regulator of the spore photoproduct lyase operon (splAB). The polypeptide is Transcriptional regulator SplA (splA) (Bacillus subtilis (strain 168)).